A 420-amino-acid polypeptide reads, in one-letter code: Gamma-glutamyl phosphate reductase (420 aa).

This sequence belongs to the gamma-glutamyl phosphate reductase family.

The protein localises to the cytoplasm. It carries out the reaction L-glutamate 5-semialdehyde + phosphate + NADP(+) = L-glutamyl 5-phosphate + NADPH + H(+). It functions in the pathway amino-acid biosynthesis; L-proline biosynthesis; L-glutamate 5-semialdehyde from L-glutamate: step 2/2. Its function is as follows. Catalyzes the NADPH-dependent reduction of L-glutamate 5-phosphate into L-glutamate 5-semialdehyde and phosphate. The product spontaneously undergoes cyclization to form 1-pyrroline-5-carboxylate. The protein is Gamma-glutamyl phosphate reductase of Cereibacter sphaeroides (strain KD131 / KCTC 12085) (Rhodobacter sphaeroides).